Consider the following 84-residue polypeptide: MAVKLIYLFLFLYIALLISGRTMSTTAGRRDGKSGRTEWLYVAGECAKLPRCNKYCVSNGFHLGGFCEKLSPQASYLSCVCKYT.

An N-terminal signal peptide occupies residues 1 to 24; that stretch reads MAVKLIYLFLFLYIALLISGRTMS. 3 cysteine pairs are disulfide-bonded: cysteine 46-cysteine 67, cysteine 52-cysteine 79, and cysteine 56-cysteine 81.

Belongs to the DEFL family.

Its subcellular location is the secreted. The sequence is that of Defensin-like protein 37 (EDA21) from Arabidopsis thaliana (Mouse-ear cress).